Here is a 212-residue protein sequence, read N- to C-terminus: Small ribosomal subunit protein uS4c (212 aa).

Positions 89 to 152 (MRLDNIIFRL…RSRALVDKNL (64 aa)) constitute an S4 RNA-binding domain.

This sequence belongs to the universal ribosomal protein uS4 family. In terms of assembly, part of the 30S ribosomal subunit. Contacts protein S5. The interaction surface between S4 and S5 is involved in control of translational fidelity.

It is found in the plastid. It localises to the chloroplast. Functionally, one of the primary rRNA binding proteins, it binds directly to 16S rRNA where it nucleates assembly of the body of the 30S subunit. With S5 and S12 plays an important role in translational accuracy. This Staurastrum punctulatum (Green alga) protein is Small ribosomal subunit protein uS4c (rps4).